Consider the following 96-residue polypeptide: Teretoxin Tan6.14 (96 aa).

Residues 1–21 (MRPLLVFVLMVSVSLAFSLEG) form the signal peptide. Residues 22–60 (MPNNGGDSVASITANQARRFKRNPLFSFAQHSLVDLKAR) constitute a propeptide that is removed on maturation.

Contains 3 disulfide bonds. In terms of tissue distribution, expressed by the venom duct.

It is found in the secreted. The protein is Teretoxin Tan6.14 of Terebra anilis (Auger snail).